Here is a 105-residue protein sequence, read N- to C-terminus: uncharacterized protein (105 aa).

Residues 13 to 35 traverse the membrane as a helical segment; it reads LLFAFVVVIVVLTLSYVYAQNII.

The protein localises to the membrane. This is an uncharacterized protein from Archaeoglobus fulgidus (strain ATCC 49558 / DSM 4304 / JCM 9628 / NBRC 100126 / VC-16).